We begin with the raw amino-acid sequence, 277 residues long: Bifunctional protein FolD 1 (277 aa).

NADP(+)-binding positions include 162–164 (GDS) and Ser-187.

It belongs to the tetrahydrofolate dehydrogenase/cyclohydrolase family. Homodimer.

The catalysed reaction is (6R)-5,10-methylene-5,6,7,8-tetrahydrofolate + NADP(+) = (6R)-5,10-methenyltetrahydrofolate + NADPH. The enzyme catalyses (6R)-5,10-methenyltetrahydrofolate + H2O = (6R)-10-formyltetrahydrofolate + H(+). It participates in one-carbon metabolism; tetrahydrofolate interconversion. Its function is as follows. Catalyzes the oxidation of 5,10-methylenetetrahydrofolate to 5,10-methenyltetrahydrofolate and then the hydrolysis of 5,10-methenyltetrahydrofolate to 10-formyltetrahydrofolate. This is Bifunctional protein FolD 1 from Syntrophomonas wolfei subsp. wolfei (strain DSM 2245B / Goettingen).